A 493-amino-acid chain; its full sequence is ATP synthase subunit beta, chloroplastic (493 aa).

Residue 170 to 177 coordinates ATP; it reads GGAGVGKT.

The protein belongs to the ATPase alpha/beta chains family. In terms of assembly, F-type ATPases have 2 components, CF(1) - the catalytic core - and CF(0) - the membrane proton channel. CF(1) has five subunits: alpha(3), beta(3), gamma(1), delta(1), epsilon(1). CF(0) has four main subunits: a(1), b(1), b'(1) and c(9-12).

The protein localises to the plastid. It localises to the chloroplast thylakoid membrane. It carries out the reaction ATP + H2O + 4 H(+)(in) = ADP + phosphate + 5 H(+)(out). Functionally, produces ATP from ADP in the presence of a proton gradient across the membrane. The catalytic sites are hosted primarily by the beta subunits. This Chaetosphaeridium globosum (Charophycean green alga) protein is ATP synthase subunit beta, chloroplastic.